The primary structure comprises 261 residues: MIETYSQPSPRSVATGPPVSMKIFMYLLTVFLITQMIGSALFAVYLHRRLDKIEDERNLHEDFVFMKTIQRCNKGEGSLSLLNCEEIRSRFEDLVKDIMQNKEVKKKEKNFEMHKGDQEPQIAAHVISEASSKTTSVLQWAPKGYYTLSNNLVTLENGKQLAVKRQGFYYIYTQVTFCSNRETLSQAPFIASLCLKSPSGSERILLRAANTHSSSKPCGQQSIHLGGVFELQSGASVFVNVTDPSQVSHGTGFTSFGLLKL.

Topologically, residues 1–22 (MIETYSQPSPRSVATGPPVSMK) are cytoplasmic. The helical; Signal-anchor for type II membrane protein transmembrane segment at 23 to 46 (IFMYLLTVFLITQMIGSALFAVYL) threads the bilayer. Over 47–261 (HRRLDKIEDE…GFTSFGLLKL (215 aa)) the chain is Extracellular. The THD domain occupies 122 to 261 (IAAHVISEAS…GFTSFGLLKL (140 aa)). A disulfide bridge connects residues Cys178 and Cys218. The N-linked (GlcNAc...) asparagine glycan is linked to Asn240.

The protein belongs to the tumor necrosis factor family. As to quaternary structure, homotrimer. Interacts with CD28. CD40 ligand, soluble form: Exists as either a monomer or a homotrimer. Forms a ternary complex between CD40 and integrins for CD40-CD40LG signaling. In terms of processing, the soluble form derives from the membrane form by proteolytic processing.

The protein resides in the cell membrane. The protein localises to the cell surface. It is found in the secreted. In terms of biological role, cytokine that acts as a ligand to CD40/TNFRSF5. Costimulates T-cell proliferation and cytokine production. Its cross-linking on T-cells generates a costimulatory signal which enhances the production of IL4 and IL10 in conjunction with the TCR/CD3 ligation and CD28 costimulation. Induces the activation of NF-kappa-B. Induces the activation of kinases MAPK8 and PAK2 in T-cells. Mediates B-cell proliferation in the absence of co-stimulus as well as IgE production in the presence of IL4. Involved in immunoglobulin class switching. Acts as a ligand for integrins, specifically ITGA5:ITGB1 and ITGAV:ITGB3; both integrins and the CD40 receptor are required for activation of CD40-CD40LG signaling, which have cell-type dependent effects, such as B-cell activation, NF-kappa-B signaling and anti-apoptotic signaling. In Bos taurus (Bovine), this protein is CD40 ligand (CD40LG).